The following is a 345-amino-acid chain: Ryncolin-4 (345 aa).

The N-terminal stretch at 1-19 (MKPWAAFHLIFLVASSLEG) is a signal peptide. Residues 48 to 118 (ILQSQPGIPG…DKGDKGEDCN (71 aa)) form a disordered region. Residues 57–114 (GIPGVPGTNGSEGLKGDPGPQGPPGIRGPDGIRGEAGPKGDKGDQGDKGDKGDKGDKG) form the Collagen-like domain. Over residues 86-116 (DGIRGEAGPKGDKGDQGDKGDKGDKGDKGED) the composition is skewed to basic and acidic residues. The region spanning 121–339 (DCLPTEVRNC…YADMKIRPQK (219 aa)) is the Fibrinogen C-terminal domain. Cystine bridges form between Cys130-Cys158 and Cys282-Cys295.

It belongs to the ficolin lectin family. Veficolin subfamily. Post-translationally, hydroxylated, possibly at Pro-80. Expressed by the venom duct.

The protein localises to the secreted. Its function is as follows. Initiates complement activation and/or interferes in platelet aggregation and/or blood coagulation. The polypeptide is Ryncolin-4 (Cerberus rynchops (Dog-faced water snake)).